Here is a 121-residue protein sequence, read N- to C-terminus: Ribonuclease P protein component (121 aa).

Belongs to the RnpA family. Consists of a catalytic RNA component (M1 or rnpB) and a protein subunit.

The enzyme catalyses Endonucleolytic cleavage of RNA, removing 5'-extranucleotides from tRNA precursor.. Functionally, RNaseP catalyzes the removal of the 5'-leader sequence from pre-tRNA to produce the mature 5'-terminus. It can also cleave other RNA substrates such as 4.5S RNA. The protein component plays an auxiliary but essential role in vivo by binding to the 5'-leader sequence and broadening the substrate specificity of the ribozyme. The sequence is that of Ribonuclease P protein component from Bifidobacterium adolescentis (strain ATCC 15703 / DSM 20083 / NCTC 11814 / E194a).